The following is a 1044-amino-acid chain: Translation initiation factor IF-2 (1044 aa).

A disordered region spans residues 31–425; that stretch reads VRSASSTVEP…RKSKRAKRQE (395 aa). 2 stretches are compositionally biased toward pro residues: residues 77 to 98 and 106 to 116; these read GPAP…PQPA and APAPAPAPRPA. Residues 117–148 show a composition bias toward low complexity; the sequence is EPAANPAPAAPPAFQAPAPAPAERPAAAQRPA. A compositionally biased stretch (gly residues) spans 168-185; it reads GGPGQGPRPGARPGGPGA. Residues 204–247 show a composition bias toward basic and acidic residues; the sequence is GPGDRPERSERPDRGDRPQGDRPRSDRPQGERQQGDRPQGDRPG. A compositionally biased stretch (low complexity) spans 285 to 304; the sequence is GGAPRPGNNPFASNQGMPRP. Pro residues predominate over residues 305 to 328; it reads QGGPRPTPAGPGGPRPGGPRPNPG. Residues 329–338 are compositionally biased toward low complexity; sequence MMPARPTVGR. Residues 339 to 409 show a composition bias toward gly residues; the sequence is PGAGPGAGRP…GTQGAFGRAG (71 aa). Over residues 413 to 422 the composition is skewed to basic residues; that stretch reads VRGRKSKRAK. A tr-type G domain is found at 537-709; it reads ARPPVVTVMG…VLLTADASLD (173 aa). The G1 stretch occupies residues 546-553; it reads GHVDHGKT. 546 to 553 contributes to the GTP binding site; sequence GHVDHGKT. Residues 571–575 form a G2 region; the sequence is GITQH. Residues 596–599 are G3; sequence DTPG. GTP is bound by residues 596 to 600 and 650 to 653; these read DTPGH and NKVD. Residues 650–653 form a G4 region; the sequence is NKVD. The G5 stretch occupies residues 686–688; the sequence is SAR.

This sequence belongs to the TRAFAC class translation factor GTPase superfamily. Classic translation factor GTPase family. IF-2 subfamily.

Its subcellular location is the cytoplasm. One of the essential components for the initiation of protein synthesis. Protects formylmethionyl-tRNA from spontaneous hydrolysis and promotes its binding to the 30S ribosomal subunits. Also involved in the hydrolysis of GTP during the formation of the 70S ribosomal complex. This is Translation initiation factor IF-2 from Kineococcus radiotolerans (strain ATCC BAA-149 / DSM 14245 / SRS30216).